The sequence spans 183 residues: Oleosin Bn-V (183 aa).

The interval 1–47 is polar; it reads PARTHHDITTRDQYPLISRDRDQYGMIGRDQYNMSGQNYSKSRQIAK. 2 repeats span residues 11–20 and 21–30; these read RDQYPLISRD and RDQYGMIGRD. The tract at residues 48-119 is hydrophobic; the sequence is ATTAVTAGDS…AAITVFSWIY (72 aa). A run of 2 helical transmembrane segments spans residues 57-77 and 99-119; these read SLLV…IVAT and TGFL…SWIY. Residues 154-183 are disordered; the sequence is YGQQHTGEEHDRDRDHRTDRDRTRGTQHTT. The span at 159–177 shows a compositional bias: basic and acidic residues; it reads TGEEHDRDRDHRTDRDRTR.

Belongs to the oleosin family.

The protein resides in the lipid droplet. The protein localises to the membrane. In terms of biological role, may have a structural role to stabilize the lipid body during desiccation of the seed by preventing coalescence of the oil. Probably interacts with both lipid and phospholipid moieties of lipid bodies. May also provide recognition signals for specific lipase anchorage in lipolysis during seedling growth. The chain is Oleosin Bn-V from Brassica napus (Rape).